A 92-amino-acid chain; its full sequence is Small ribosomal subunit protein uS19 (92 aa).

This sequence belongs to the universal ribosomal protein uS19 family.

Functionally, protein S19 forms a complex with S13 that binds strongly to the 16S ribosomal RNA. This is Small ribosomal subunit protein uS19 from Parvibaculum lavamentivorans (strain DS-1 / DSM 13023 / NCIMB 13966).